Here is a 396-residue protein sequence, read N- to C-terminus: Elongation factor Tu 1 (396 aa).

The 197-residue stretch at 10–206 folds into the tr-type G domain; the sequence is KPHVNVGTIG…TLDTYIPEPE (197 aa). The interval 19 to 26 is G1; sequence GHVDHGKT. A GTP-binding site is contributed by 19–26; it reads GHVDHGKT. T26 serves as a coordination point for Mg(2+). A G2 region spans residues 60-64; it reads GITIN. The segment at 81 to 84 is G3; that stretch reads DCPG. GTP contacts are provided by residues 81–85 and 136–139; these read DCPGH and NKCD. Residues 136–139 form a G4 region; sequence NKCD. Positions 174–176 are G5; that stretch reads SAL.

It belongs to the TRAFAC class translation factor GTPase superfamily. Classic translation factor GTPase family. EF-Tu/EF-1A subfamily. As to quaternary structure, monomer.

It localises to the cytoplasm. The catalysed reaction is GTP + H2O = GDP + phosphate + H(+). Its function is as follows. GTP hydrolase that promotes the GTP-dependent binding of aminoacyl-tRNA to the A-site of ribosomes during protein biosynthesis. In Psychrobacter sp. (strain PRwf-1), this protein is Elongation factor Tu 1.